The chain runs to 29 residues: Toxin Bcg III 15.67 (29 aa).

In terms of domain architecture, EGF-like spans 2-29; the sequence is QGTACTGEHAHSFCLNGGTCRHIQQLGE. The cysteines at positions 6 and 21 are disulfide-linked.

It localises to the secreted. The protein resides in the nematocyst. Functionally, has both toxic and EGF activity. The sequence is that of Toxin Bcg III 15.67 from Bunodosoma cangicum (Sea anemone).